The chain runs to 109 residues: Large ribosomal subunit protein uL24 (109 aa).

This sequence belongs to the universal ribosomal protein uL24 family. In terms of assembly, part of the 50S ribosomal subunit.

Functionally, one of two assembly initiator proteins, it binds directly to the 5'-end of the 23S rRNA, where it nucleates assembly of the 50S subunit. In terms of biological role, one of the proteins that surrounds the polypeptide exit tunnel on the outside of the subunit. This Desulforapulum autotrophicum (strain ATCC 43914 / DSM 3382 / VKM B-1955 / HRM2) (Desulfobacterium autotrophicum) protein is Large ribosomal subunit protein uL24.